A 253-amino-acid polypeptide reads, in one-letter code: MVSSSTTVPRSGVYYFSQGWKLVTLPGIRRFVILPLLVNIVLMGGAFWWLFTQLDAWIPSLMSHVPDWLQWLSYLLWPIAVISVLLVFGYFFSTLANWIAAPFNGLLAEQLEARLTGATPPDTGILGIMKDVPRIMKREWQKLAWYLPRAIVLLVLYFIPGIGQTIAPVLWFLFSAWMLAIQYCDYPFDNHKVPFKTMRAALRTQKVANMQFGALTSLFTMIPVLNLFIMPVAVCGATAMWVDCWRAKHALWK.

4 helical membrane passes run 31–51, 72–92, 151–171, and 222–242; these read FVILPLLVNIVLMGGAFWWLF, LSYLLWPIAVISVLLVFGYFF, IVLLVLYFIPGIGQTIAPVLW, and IPVLNLFIMPVAVCGATAMWV.

The protein belongs to the CysZ family.

The protein localises to the cell inner membrane. Its function is as follows. High affinity, high specificity proton-dependent sulfate transporter, which mediates sulfate uptake. Provides the sulfur source for the cysteine synthesis pathway. The polypeptide is Sulfate transporter CysZ (Salmonella paratyphi A (strain AKU_12601)).